We begin with the raw amino-acid sequence, 255 residues long: Syntaxin-6 (255 aa).

S2 bears the N-acetylserine mark. S2 carries the post-translational modification Phosphoserine. The interval 2–168 (SMEDPFFVVK…QAQQQLIVEQ (167 aa)) is required for interaction with VPS51. The Cytoplasmic segment spans residues 2 to 234 (SMEDPFFVVK…VSHMTSDRRQ (233 aa)). A coiled-coil region spans residues 41-74 (EEIDWTTNELRNNLRSIEWDLEDLDETISIVEAN). 2 positions are modified to phosphoserine: S129 and S152. The t-SNARE coiled-coil homology domain occupies 163 to 225 (QLIVEQQDEQ…DNVMKKLAKV (63 aa)). The chain crosses the membrane as a helical; Anchor for type IV membrane protein span at residues 235-255 (WCAIAILFAVLVVVLILFLVL).

This sequence belongs to the syntaxin family. As to quaternary structure, identified in a complex containing STX6, STX12 and VAMP4. This complex also includes VTI1A. Binds EEA1. Interacts with VPS45A and GOPC. Interacts with MARCHF2; the interaction promotes MARCHF2-mediated ubiquitination and degradation of CFTR. Interacts with MARCHF3. Interacts with BLTP3B (via C-terminal coiled-coil domain). Interacts with BAIAP3; this interaction is increased in the presence of calcium. Interacts with VPS13B.

It is found in the golgi apparatus membrane. It localises to the golgi apparatus. The protein localises to the trans-Golgi network membrane. Its subcellular location is the recycling endosome membrane. Its function is as follows. SNARE promoting movement of transport vesicles to target membranes. Targets endosomes to the trans-Golgi network, and may therefore function in retrograde trafficking. Together with SNARE STX12, promotes movement of vesicles from endosomes to the cell membrane, and may therefore function in the endocytic recycling pathway. This Mus musculus (Mouse) protein is Syntaxin-6 (Stx6).